The following is a 44-amino-acid chain: Photosystem I reaction center subunit IX (44 aa).

The chain crosses the membrane as a helical span at residues 7-27; sequence YLSVAPVLSTLSLGFLTGFLI.

This sequence belongs to the PsaJ family.

The protein resides in the plastid membrane. In terms of biological role, may help in the organization of the PsaE and PsaF subunits. The sequence is that of Photosystem I reaction center subunit IX from Cuscuta gronovii (Common dodder).